A 145-amino-acid chain; its full sequence is Probable flagellum biosynthesis repressor protein FlbT (145 aa).

This sequence belongs to the FlbT family.

Its function is as follows. Has a post-transcriptional repressor function in flagellum biogenesis. Associates with the 5'-UTR of fljK mRNA and promotes its degradation. The sequence is that of Probable flagellum biosynthesis repressor protein FlbT from Chelativorans sp. (strain BNC1).